The following is a 210-amino-acid chain: Ribosomal RNA small subunit methyltransferase G (210 aa).

Residues G76, L81, 127-128 (VE), and R142 contribute to the S-adenosyl-L-methionine site.

This sequence belongs to the methyltransferase superfamily. RNA methyltransferase RsmG family.

The protein localises to the cytoplasm. It carries out the reaction guanosine(527) in 16S rRNA + S-adenosyl-L-methionine = N(7)-methylguanosine(527) in 16S rRNA + S-adenosyl-L-homocysteine. In terms of biological role, specifically methylates the N7 position of guanine in position 527 of 16S rRNA. This Aliivibrio fischeri (strain ATCC 700601 / ES114) (Vibrio fischeri) protein is Ribosomal RNA small subunit methyltransferase G.